A 362-amino-acid polypeptide reads, in one-letter code: NAD(P)H-quinone oxidoreductase subunit 1, chloroplastic (362 aa).

A run of 8 helical transmembrane segments spans residues 29 to 49 (ILPI…IVWL), 103 to 123 (IAVI…HFVL), 128 to 148 (IGVF…LMAG), 164 to 184 (AAQS…ISLL), 202 to 222 (FFGW…ISSL), 247 to 267 (YSGI…LVSS), 303 to 323 (TMGI…SITI), and 342 to 362 (FLLP…LVSL).

The protein belongs to the complex I subunit 1 family. As to quaternary structure, NDH is composed of at least 16 different subunits, 5 of which are encoded in the nucleus.

Its subcellular location is the plastid. It localises to the chloroplast thylakoid membrane. It carries out the reaction a plastoquinone + NADH + (n+1) H(+)(in) = a plastoquinol + NAD(+) + n H(+)(out). The catalysed reaction is a plastoquinone + NADPH + (n+1) H(+)(in) = a plastoquinol + NADP(+) + n H(+)(out). NDH shuttles electrons from NAD(P)H:plastoquinone, via FMN and iron-sulfur (Fe-S) centers, to quinones in the photosynthetic chain and possibly in a chloroplast respiratory chain. The immediate electron acceptor for the enzyme in this species is believed to be plastoquinone. Couples the redox reaction to proton translocation, and thus conserves the redox energy in a proton gradient. The protein is NAD(P)H-quinone oxidoreductase subunit 1, chloroplastic of Hordeum vulgare (Barley).